Reading from the N-terminus, the 135-residue chain is MASSSSPIFLMIIFSMWLLFSYSESTEYLVRDSENSWKVNFPSRDALNRWVTRHQLTIHDTIDVVDEDDCNTEIRSKLGGDFVVTKRPLVLPPLITLPLSPSPAPAPSLSGAAAGHGFIVWLGASLPMLMFLIWL.

An N-terminal signal peptide occupies residues 1–23; sequence MASSSSPIFLMIIFSMWLLFSYS.

Invasion zone and early symbiotic zone.

Functionally, involved in the infection process during the plant-rhizobium interaction. The chain is Early nodulin-5 (ENOD5) from Pisum sativum (Garden pea).